The primary structure comprises 425 residues: Serine hydroxymethyltransferase (425 aa).

(6S)-5,6,7,8-tetrahydrofolate is bound by residues L124 and 128–130 (GHL). K233 carries the N6-(pyridoxal phosphate)lysine modification.

The protein belongs to the SHMT family. As to quaternary structure, homodimer. Pyridoxal 5'-phosphate serves as cofactor.

The protein resides in the cytoplasm. The enzyme catalyses (6R)-5,10-methylene-5,6,7,8-tetrahydrofolate + glycine + H2O = (6S)-5,6,7,8-tetrahydrofolate + L-serine. It participates in one-carbon metabolism; tetrahydrofolate interconversion. It functions in the pathway amino-acid biosynthesis; glycine biosynthesis; glycine from L-serine: step 1/1. In terms of biological role, catalyzes the reversible interconversion of serine and glycine with tetrahydrofolate (THF) serving as the one-carbon carrier. This reaction serves as the major source of one-carbon groups required for the biosynthesis of purines, thymidylate, methionine, and other important biomolecules. Also exhibits THF-independent aldolase activity toward beta-hydroxyamino acids, producing glycine and aldehydes, via a retro-aldol mechanism. The chain is Serine hydroxymethyltransferase from Clavibacter michiganensis subsp. michiganensis (strain NCPPB 382).